A 2715-amino-acid polypeptide reads, in one-letter code: Histone-lysine N-methyltransferase 2B (2715 aa).

Positions 1-11 (MAAAAGGGSCP) are enriched in gly residues. Disordered stretches follow at residues 1–65 (MAAA…GEDT), 81–302 (RRLW…GGLP), 320–518 (SLGL…PKST), and 532–771 (VSAR…QMPP). The residue at position 2 (A2) is an N-acetylalanine. The segment covering 12–24 (GPGSARGRFPGRP) has biased composition (low complexity). The short motif at 17–36 (RGRFPGRPRGAGGGGGRGGR) is the Menin-binding motif (MBM) element. Composition is skewed to gly residues over residues 25-38 (RGAG…GRGN) and 49-60 (RGGGATGPGGAE). Positions 37–44 (GNGAERVR) form a DNA-binding region, a.T hook 1. Residues 109–123 (PEEESSDGESDEEEF) show a composition bias toward acidic residues. The a.T hook 2 DNA-binding region spans 110–117 (EEESSDGE). Phosphoserine is present on residues S113, S114, and S118. Over residues 144-158 (QRGRAPRGRGRKHKT) the composition is skewed to basic residues. Over residues 160 to 176 (PLPPPRLADVAPTPPKT) the composition is skewed to pro residues. Low complexity predominate over residues 199–208 (RAQAPQAPRS). Phosphoserine is present on S351. Positions 357 to 365 (QEQKLDDEE) form a DNA-binding region, a.T hook 3. A compositionally biased stretch (acidic residues) spans 361–374 (LDDEEEEKKEEEEK). Basic and acidic residues predominate over residues 375 to 387 (DKEGEEKEERAVA). A compositionally biased stretch (pro residues) spans 401–449 (LPPPPLTPPAPSPPPPLPPPSTSPPPPLCPPPPPPVSPPPLPSPPPPPA). Positions 545–556 (RFMDEDPPKPPK) are enriched in basic and acidic residues. Residues 568–596 (TTSPPVPQEPAPVPSPPRAPTPPSTPVPL) show a composition bias toward pro residues. The segment covering 597-608 (PEKRRSILREPT) has biased composition (basic and acidic residues). Residues 618-637 (LPPPPPAPPPPPAPSPPPAP) are compositionally biased toward pro residues. Residues 731–751 (PQTQAQLLQPLQALQTQLLPQ) show a composition bias toward low complexity. A compositionally biased stretch (pro residues) spans 752 to 769 (ALPPPQPQLQPPPSPQQM). K805 is covalently cross-linked (Glycyl lysine isopeptide (Lys-Gly) (interchain with G-Cter in SUMO2)). Disordered regions lie at residues 819-868 (PLSP…GPRI) and 894-959 (SALP…HHGK). Phosphoserine occurs at positions 821, 844, and 861. Over residues 836–857 (ISDRGPVRSEDESVEAKRERPS) the composition is skewed to basic and acidic residues. Positions 907 to 917 (EDTSSASETES) are enriched in low complexity. A Phosphoserine modification is found at S936. Residues 948–959 (TPRRSLPSHHGK) show a composition bias toward basic residues. The segment at 959–1006 (KKMRMARCGHCRGCLRVQDCGSCVNCLDKPKFGGPNTKKQCCVYRKCD) adopts a CXXC-type zinc-finger fold. Zn(2+) is bound by residues C966, C969, C972, C978, C981, C984, C1000, and C1005. The disordered stretch occupies residues 1027–1132 (LLPWDSDESP…RPRKPTLQPV (106 aa)). S1032, S1035, S1092, and S1095 each carry phosphoserine. K1136 participates in a covalent cross-link: Glycyl lysine isopeptide (Lys-Gly) (interchain with G-Cter in SUMO2). The disordered stretch occupies residues 1146–1166 (LAPGPFASFPNGWTGKQKSPD). 3 PHD-type zinc fingers span residues 1201 to 1252 (PMVC…CKFC), 1249 to 1303 (CKFC…CVRC), and 1335 to 1396 (GNYC…CAGA). Residues 1404 to 1504 (ALSGALQGGL…GLLLKLLESA (101 aa)) form the Bromo domain. The disordered stretch occupies residues 1545–1567 (QQEPETPESGQPPGDPSAAFQGK). The segment at 1578 to 1618 (PRQCALCLKYGDADSKEAGRLLYIGQNEWTHVNCAIWSAEV) adopts a C2HC pre-PHD-type zinc-finger fold. Residues 1639–1686 (MRCELCLKPGATVGCCLSSCLSNFHFMCARASYCIFQDDKKVFCQKHT) form a PHD-type 4 zinc finger. An FYR N-terminal domain is found at 1727 to 1783 (AINVLIGSIRIDSLGTLSDLSDCEGRLFPIGYQCSRLYWSTVDARRRCWYRCRILEY). Disordered stretches follow at residues 1806–1978 (HSPA…PDFE), 2008–2093 (VAAG…VVRA), 2118–2162 (LKNL…PTRT), and 2280–2412 (RVST…RTGP). Positions 1876 to 1894 (PLGGVSFGPLPSPGSPSSL) are enriched in low complexity. Phosphoserine occurs at positions 1930 and 1936. Positions 1960–1972 (PPGPAPSPPPPED) are enriched in pro residues. Residues 2062 to 2072 (DGVDDGTDSEA) are compositionally biased toward acidic residues. T2068 and T2083 each carry phosphothreonine. A compositionally biased stretch (polar residues) spans 2144 to 2153 (NGSQPSQGLT). A phosphoserine mark is found at S2288 and S2348. Over residues 2342 to 2351 (EPAGEESPGP) the composition is skewed to low complexity. Over residues 2359-2373 (LPLPEDGPPQVPDGP) the composition is skewed to pro residues. Positions 2411–2492 (GPHLRFEISS…QRCQHYKFRY (82 aa)) constitute an FYR C-terminal domain. Residues 2508-2513 (GAARAE) carry the WDR5 interaction motif (WIN) motif. One can recognise an SET domain in the interval 2575–2691 (EAVGVYRSAI…RGEELTYDYK (117 aa)). Residues H2585, R2587, Y2629, and 2652 to 2653 (NH) each bind S-adenosyl-L-methionine. Zn(2+) is bound by residues C2655 and C2703. Positions 2699–2715 (NKLPCNCGAKRCRRFLN) constitute a Post-SET domain. N2704 provides a ligand contact to S-adenosyl-L-methionine. The Zn(2+) site is built by C2705 and C2710.

The protein belongs to the class V-like SAM-binding methyltransferase superfamily. Histone-lysine methyltransferase family. TRX/MLL subfamily. As to quaternary structure, component of the menin-associated histone methyltransferase complex, at least composed of KMT2B/MLL4, ASH2L, RBBP5, WDR5, DPY30, MEN1; the complex interacts with POLR2A and POLR2B via MEN1. Interacts with NFE2. Interacts with KDM6B. Interacts (via WIN motif) with WDR5. Interacts (via MBM motif) with MEN1. Forms a core complex with the evolutionary conserved subcomplex WRAD composed of WDR5, RBBP5, ASH2L/ASH2 and DPY30 subunits; WRAD differentially stimulates the methyltransferase activity. As to expression, widely expressed. Highest levels in testis. Also found in brain with higher expression in the cerebellum than in any other region, bone marrow, heart, muscle, kidney, placenta, spleen, thymus, prostate, ovary, intestine, colon, peripheral blood lymphocytes and pancreas. Often amplified in pancreatic carcinomas.

Its subcellular location is the nucleus. It catalyses the reaction L-lysyl(4)-[histone H3] + S-adenosyl-L-methionine = N(6)-methyl-L-lysyl(4)-[histone H3] + S-adenosyl-L-homocysteine + H(+). It carries out the reaction N(6)-methyl-L-lysyl(4)-[histone H3] + S-adenosyl-L-methionine = N(6),N(6)-dimethyl-L-lysyl(4)-[histone H3] + S-adenosyl-L-homocysteine + H(+). Functionally, histone methyltransferase that catalyzes methyl group transfer from S-adenosyl-L-methionine to the epsilon-amino group of 'Lys-4' of histone H3 (H3K4) via a non-processive mechanism. Part of chromatin remodeling machinery predominantly forms H3K4me1 and H3K4me2 methylation marks at active chromatin sites where transcription and DNA repair take place. Likely plays a redundant role with KMT2C in enriching H3K4me1 marks on primed and active enhancer elements. Plays a central role in beta-globin locus transcription regulation by being recruited by NFE2. Plays an important role in controlling bulk H3K4me during oocyte growth and preimplantation development. Required during the transcriptionally active period of oocyte growth for the establishment and/or maintenance of bulk H3K4 trimethylation (H3K4me3), global transcriptional silencing that preceeds resumption of meiosis, oocyte survival and normal zygotic genome activation. This Homo sapiens (Human) protein is Histone-lysine N-methyltransferase 2B (KMT2B).